Consider the following 538-residue polypeptide: Putative cysteine ligase BshC (538 aa).

Positions 460–483 (KINEQIELLEKMLKRNVEKKHEVQ) form a coiled coil.

This sequence belongs to the BshC family.

Its function is as follows. Involved in bacillithiol (BSH) biosynthesis. May catalyze the last step of the pathway, the addition of cysteine to glucosamine malate (GlcN-Mal) to generate BSH. The protein is Putative cysteine ligase BshC of Bacillus mycoides (strain KBAB4) (Bacillus weihenstephanensis).